A 103-amino-acid polypeptide reads, in one-letter code: UPF0145 protein BLi01945/BL05168 (103 aa).

This sequence belongs to the UPF0145 family.

In Bacillus licheniformis (strain ATCC 14580 / DSM 13 / JCM 2505 / CCUG 7422 / NBRC 12200 / NCIMB 9375 / NCTC 10341 / NRRL NRS-1264 / Gibson 46), this protein is UPF0145 protein BLi01945/BL05168.